The following is a 337-amino-acid chain: GTP 3',8-cyclase (337 aa).

Residues 17-243 (PFQRQYYYLR…HKSHTDGPAK (227 aa)) enclose the Radical SAM core domain. Position 26 (Arg26) interacts with GTP. [4Fe-4S] cluster-binding residues include Cys33 and Cys37. Tyr39 provides a ligand contact to S-adenosyl-L-methionine. Residue Cys40 coordinates [4Fe-4S] cluster. Arg76 is a binding site for GTP. Gly80 is an S-adenosyl-L-methionine binding site. Thr107 is a GTP binding site. S-adenosyl-L-methionine is bound at residue Ser131. Lys168 contacts GTP. Met202 is a binding site for S-adenosyl-L-methionine. [4Fe-4S] cluster contacts are provided by Cys265 and Cys268. Position 270–272 (270–272 (RLR)) interacts with GTP. Cys282 contacts [4Fe-4S] cluster.

The protein belongs to the radical SAM superfamily. MoaA family. In terms of assembly, monomer and homodimer. The cofactor is [4Fe-4S] cluster.

The catalysed reaction is GTP + AH2 + S-adenosyl-L-methionine = (8S)-3',8-cyclo-7,8-dihydroguanosine 5'-triphosphate + 5'-deoxyadenosine + L-methionine + A + H(+). Its pathway is cofactor biosynthesis; molybdopterin biosynthesis. In terms of biological role, catalyzes the cyclization of GTP to (8S)-3',8-cyclo-7,8-dihydroguanosine 5'-triphosphate. In Haemophilus influenzae (strain 86-028NP), this protein is GTP 3',8-cyclase.